The primary structure comprises 402 residues: Sulfate adenylyltransferase (402 aa).

Belongs to the sulfate adenylyltransferase family.

It catalyses the reaction sulfate + ATP + H(+) = adenosine 5'-phosphosulfate + diphosphate. Its pathway is sulfur metabolism; hydrogen sulfide biosynthesis; sulfite from sulfate: step 1/3. This is Sulfate adenylyltransferase from Vesicomyosocius okutanii subsp. Calyptogena okutanii (strain HA).